The following is a 412-amino-acid chain: Na(+)-translocating NADH-quinone reductase subunit B (412 aa).

3 helical membrane passes run 57-77 (MILV…NVGL), 127-147 (VFFL…EVLF), and 163-183 (SILF…ALGI). FMN phosphoryl threonine is present on T236. Helical transmembrane passes span 270 to 290 (GSIG…ILFG), 297 to 317 (IVAG…VIGS), 322 to 342 (MFAM…GMMF), 358 to 378 (WSYG…NPAY), and 381 to 401 (GMML…YLVV).

Belongs to the NqrB/RnfD family. In terms of assembly, composed of six subunits; NqrA, NqrB, NqrC, NqrD, NqrE and NqrF. FMN is required as a cofactor.

It is found in the cell inner membrane. The enzyme catalyses a ubiquinone + n Na(+)(in) + NADH + H(+) = a ubiquinol + n Na(+)(out) + NAD(+). In terms of biological role, NQR complex catalyzes the reduction of ubiquinone-1 to ubiquinol by two successive reactions, coupled with the transport of Na(+) ions from the cytoplasm to the periplasm. NqrA to NqrE are probably involved in the second step, the conversion of ubisemiquinone to ubiquinol. The chain is Na(+)-translocating NADH-quinone reductase subunit B from Klebsiella pneumoniae subsp. pneumoniae (strain ATCC 700721 / MGH 78578).